Consider the following 87-residue polypeptide: Homeotic protein ultrabithorax (87 aa).

The Antp-type hexapeptide motif lies at 22-27; sequence FYPWMA.

This sequence belongs to the Antp homeobox family. In terms of tissue distribution, in the embryo, expression is seen in the epidermis, somatic and visceral mesoderm, and the peripheral and central nervous system.

It is found in the nucleus. In terms of biological role, sequence-specific transcription factor which is part of a developmental regulatory system that provides cells with specific positional identities on the anterior-posterior axis. Binds the consensus region 5'-TTAAT[GT][GA]-3'. This homeotic protein controls development of the cells in the posterior thoracic and first abdominal segments. It activates the synthesis of the decapentaplegic (DPP) growth factor. This chain is Homeotic protein ultrabithorax (Ubx), found in Drosophila hydei (Fruit fly).